The primary structure comprises 480 residues: MATVEDNKKLIADVLSTYPEKAAKKRAKHLGVYEEGEADCGVKSNKQSLPGVMTARGCAYAGSKGVVWGPIKDMVHISHGPVGCGYYSWSGRRNYYIGTTGVDSFGTMQFTSDFQERDIVFGGDKKLAKIIDEIEELFPLNGGVSVQSECPVGLIGDDIESVARTKSKETGKSVVPVRCEGFRGVSQSLGHHIANDMIRDWVFPTADKENAEKGFEGTPYDVAIIGDYNIGGDAWSSRILLEEIGLRVVAQWSGDGTLTEMKATPNVKLNLIHCYRSMNYISRHMEEKYGIPWLEYNFFGPSKIAASLREIASRFDEKIQAKAEEVIEKYRKQSEEIIAKYRPRLEGKTVMMMVGGLRPRHVVPAFKDLGMEIIGTGYEFAHGDDYKRTTGYVEDATLIYDDVTGYEFEEFVKELKPDLVAAGIKEKYVFQKMALPFRQMHSWDYSGPYHGYDGFAIFARDMDLALNSPTWGLIGTPWNK.

Positions 58, 84, and 150 each coordinate [8Fe-7S] cluster. [7Fe-Mo-9S-C-homocitryl] cluster is bound by residues Cys-274 and His-441.

Belongs to the NifD/NifK/NifE/NifN family. As to quaternary structure, tetramer of two alpha and two beta chains. Forms complex with the iron protein (nitrogenase component 2). [8Fe-7S] cluster serves as cofactor. It depends on [7Fe-Mo-9S-C-homocitryl] cluster as a cofactor.

The enzyme catalyses N2 + 8 reduced [2Fe-2S]-[ferredoxin] + 16 ATP + 16 H2O = H2 + 8 oxidized [2Fe-2S]-[ferredoxin] + 2 NH4(+) + 16 ADP + 16 phosphate + 6 H(+). Its function is as follows. This molybdenum-iron protein is part of the nitrogenase complex that catalyzes the key enzymatic reactions in nitrogen fixation. The chain is Nitrogenase molybdenum-iron protein alpha chain (nifD) from Crocosphaera subtropica (strain ATCC 51142 / BH68) (Cyanothece sp. (strain ATCC 51142)).